The primary structure comprises 199 residues: Probable nicotinate-nucleotide adenylyltransferase (199 aa).

This sequence belongs to the NadD family.

The enzyme catalyses nicotinate beta-D-ribonucleotide + ATP + H(+) = deamido-NAD(+) + diphosphate. Its pathway is cofactor biosynthesis; NAD(+) biosynthesis; deamido-NAD(+) from nicotinate D-ribonucleotide: step 1/1. Functionally, catalyzes the reversible adenylation of nicotinate mononucleotide (NaMN) to nicotinic acid adenine dinucleotide (NaAD). This chain is Probable nicotinate-nucleotide adenylyltransferase, found in Corynebacterium jeikeium (strain K411).